Here is a 382-residue protein sequence, read N- to C-terminus: MSTYSRPVLLLLCGLLLLTLAIAVLNTLVPLWLAHENLPTWQVGMVSSSYFTGNLLGTLLTGKLIKRFGFNRSYYLASLIFAAGCVGLGLMVGFWSWMTWRFIAGVGCAMIWVVVESALMCSGTSRNRGRLLAAYMMVYYVGTVLGQLMISKLPTDLMSVLPWVTGMVLAAILPLLFTRIVNQGSEHHEATQVWPMLRLRHARLGVNGCIISGIVLGSLYGLMPLYLNHQGVSDSGIGFWMAVMVSAGIVGQWPIGKLADRYGRLLVLRVQVFVVILGCLAMLGNAAMAPALFILGAAGFTLYPVAMAWACEKVENHQLVAMNQALLLSYTIGSLLGPTFTAMLMQNYSDNLLFIMIASVAFIYLLMLLRKAGEHPTPVAHA.

The next 12 membrane-spanning stretches (helical) occupy residues 8–28, 39–61, 75–95, 102–122, 131–151, 157–177, 204–224, 236–256, 265–284, 289–311, 325–345, and 349–369; these read VLLL…LNTL, PTWQ…TLLT, YLAS…VGFW, FIAG…LMCS, LLAA…LMIS, LMSV…PLLF, LGVN…GLMP, GIGF…WPIG, LLVL…AMLG, APAL…AWAC, ALLL…AMLM, and SDNL…LMLL.

Belongs to the major facilitator superfamily. YcaD (TC 2.A.1.26) family.

It is found in the cell inner membrane. This is an uncharacterized protein from Enterobacter sp. (strain 638).